The sequence spans 1379 residues: DNA-directed RNA polymerase subunit beta'' (1379 aa).

Residues cysteine 220, cysteine 293, cysteine 300, and cysteine 303 each contribute to the Zn(2+) site.

The protein belongs to the RNA polymerase beta' chain family. RpoC2 subfamily. In plastids the minimal PEP RNA polymerase catalytic core is composed of four subunits: alpha, beta, beta', and beta''. When a (nuclear-encoded) sigma factor is associated with the core the holoenzyme is formed, which can initiate transcription. Requires Zn(2+) as cofactor.

Its subcellular location is the plastid. The protein resides in the chloroplast. It catalyses the reaction RNA(n) + a ribonucleoside 5'-triphosphate = RNA(n+1) + diphosphate. Functionally, DNA-dependent RNA polymerase catalyzes the transcription of DNA into RNA using the four ribonucleoside triphosphates as substrates. In Barbarea verna (Land cress), this protein is DNA-directed RNA polymerase subunit beta''.